The following is a 437-amino-acid chain: Vasoactive intestinal polypeptide receptor 2 (437 aa).

Positions 1-22 are cleaved as a signal peptide; it reads MRASVVLTCYCWLLVRVSSIHP. Over 23-123 the chain is Extracellular; that stretch reads ECRFHLEIQE…EDESKISFYI (101 aa). Cystine bridges form between C37/C60, C51/C92, and C74/C108. N-linked (GlcNAc...) asparagine glycosylation is found at N57, N87, and N91. The helical transmembrane segment at 124–149 threads the bilayer; that stretch reads LVKAIYTLGYSVSLMSLTTGSIIICL. Residues 150 to 157 are Cytoplasmic-facing; sequence FRKLHCTR. Residues 158 to 179 traverse the membrane as a helical segment; the sequence is NYIHLNLFLSFMLRAISVLVKD. Over 180–202 the chain is Extracellular; the sequence is SVLYSSSGLLRCHDQPASWVGCK. C201 and C270 are disulfide-bonded. Residues 203-227 traverse the membrane as a helical segment; that stretch reads LSLVFFQYCIMANFYWLLVEGLYLH. The Cytoplasmic portion of the chain corresponds to 228–238; sequence TLLVAILPPSR. Residues 239 to 260 form a helical membrane-spanning segment; that stretch reads CFLAYLLIGWGIPSVCIGAWTA. The Extracellular segment spans residues 261-279; that stretch reads TRLSLEDTGCWDTNDHSIP. The chain crosses the membrane as a helical span at residues 280-303; it reads WWVIRMPILISIVVNFALFISIVR. The Cytoplasmic portion of the chain corresponds to 304–324; that stretch reads ILLQKLTSPDVGGNDQSQYKR. Residues 325–345 traverse the membrane as a helical segment; the sequence is LAKSTLLLIPLFGVHYMVFAA. At 346 to 353 the chain is on the extracellular side; the sequence is FPIGISST. Residues 354–377 traverse the membrane as a helical segment; that stretch reads YQILFELCVGSFQGLVVAVLYCFL. Topologically, residues 378–437 are cytoplasmic; the sequence is NSEVQCELKRRWRGLCLTQAGSRDYRLHSWSMSRNGSESALQIHRGSRTQSFLQSETSVI.

The protein belongs to the G-protein coupled receptor 2 family. Interacts with ADCYAP1/PACAP (via N-terminal extracellular domain); activated by PACAP27 and CAPAC38 neuropeptides. Interacts with VIP; the interaction results in VIPR1 activation. As to expression, expressed at high levels in the MIN6 cells, at moderate levels in pancreatic islets, insulin-secreting cells, lung, brain, stomach, and colon, and at low levels in the heart.

It localises to the cell membrane. Its function is as follows. G protein-coupled receptor activated by the neuropeptides vasoactive intestinal peptide (VIP) and pituitary adenylate cyclase-activating polypeptide (ADCYAP1/PACAP). Binds VIP and both PACAP27 and PACAP38 bioactive peptides with the order of ligand affinity of VIP = PACAP38 &gt; PACAP27. Ligand binding causes a conformation change that triggers signaling via guanine nucleotide-binding proteins (G proteins) and modulates the activity of downstream effectors. Activates cAMP-dependent pathway. May be coupled to phospholipase C. The sequence is that of Vasoactive intestinal polypeptide receptor 2 from Mus musculus (Mouse).